Consider the following 1389-residue polypeptide: DNA-directed RNA polymerase subunit beta (1389 aa).

Belongs to the RNA polymerase beta chain family. In terms of assembly, in plastids the minimal PEP RNA polymerase catalytic core is composed of four subunits: alpha, beta, beta', and beta''. When a (nuclear-encoded) sigma factor is associated with the core the holoenzyme is formed, which can initiate transcription.

Its subcellular location is the plastid. The protein resides in the chloroplast. It catalyses the reaction RNA(n) + a ribonucleoside 5'-triphosphate = RNA(n+1) + diphosphate. Its function is as follows. DNA-dependent RNA polymerase catalyzes the transcription of DNA into RNA using the four ribonucleoside triphosphates as substrates. The sequence is that of DNA-directed RNA polymerase subunit beta from Phaeodactylum tricornutum (strain CCAP 1055/1).